The primary structure comprises 352 residues: Ion-translocating oxidoreductase complex subunit D (352 aa).

5 consecutive transmembrane segments (helical) span residues 20–40, 42–62, 78–109, 123–143, and 148–168; these read IMLL…WFFG, GTLV…ALVL, ALLT…VIIA, PAMI…TSWL, and IAVN…GHTA. Threonine 187 carries the FMN phosphoryl threonine modification. A run of 5 helical transmembrane segments spans residues 214-234, 242-262, 267-287, 301-321, and 322-342; these read ILAG…GVWL, WHIP…GWLF, LAAP…FFIL, LIFG…GGYP, and DGVA…DYYT.

Belongs to the NqrB/RnfD family. In terms of assembly, the complex is composed of six subunits: RsxA, RsxB, RsxC, RsxD, RsxE and RsxG. It depends on FMN as a cofactor.

The protein resides in the cell inner membrane. Part of a membrane-bound complex that couples electron transfer with translocation of ions across the membrane. Required to maintain the reduced state of SoxR. This is Ion-translocating oxidoreductase complex subunit D from Escherichia coli O6:H1 (strain CFT073 / ATCC 700928 / UPEC).